We begin with the raw amino-acid sequence, 123 residues long: D-ribose pyranase (123 aa).

The active-site Proton donor is histidine 20. Substrate is bound by residues aspartate 28, histidine 90, and 112-114 (YAN).

This sequence belongs to the RbsD / FucU family. RbsD subfamily. Homodecamer.

It is found in the cytoplasm. It catalyses the reaction beta-D-ribopyranose = beta-D-ribofuranose. It functions in the pathway carbohydrate metabolism; D-ribose degradation; D-ribose 5-phosphate from beta-D-ribopyranose: step 1/2. Its function is as follows. Catalyzes the interconversion of beta-pyran and beta-furan forms of D-ribose. This chain is D-ribose pyranase, found in Corynebacterium glutamicum (strain ATCC 13032 / DSM 20300 / JCM 1318 / BCRC 11384 / CCUG 27702 / LMG 3730 / NBRC 12168 / NCIMB 10025 / NRRL B-2784 / 534).